A 286-amino-acid chain; its full sequence is Bifunctional protein FolD (286 aa).

Residues 166–168 (GAS) and I232 contribute to the NADP(+) site.

The protein belongs to the tetrahydrofolate dehydrogenase/cyclohydrolase family. Homodimer.

It carries out the reaction (6R)-5,10-methylene-5,6,7,8-tetrahydrofolate + NADP(+) = (6R)-5,10-methenyltetrahydrofolate + NADPH. The catalysed reaction is (6R)-5,10-methenyltetrahydrofolate + H2O = (6R)-10-formyltetrahydrofolate + H(+). It participates in one-carbon metabolism; tetrahydrofolate interconversion. Its function is as follows. Catalyzes the oxidation of 5,10-methylenetetrahydrofolate to 5,10-methenyltetrahydrofolate and then the hydrolysis of 5,10-methenyltetrahydrofolate to 10-formyltetrahydrofolate. The polypeptide is Bifunctional protein FolD (Blochmanniella pennsylvanica (strain BPEN)).